The sequence spans 281 residues: ATP phosphoribosyltransferase (281 aa).

Belongs to the ATP phosphoribosyltransferase family. Long subfamily. Mg(2+) is required as a cofactor.

It is found in the cytoplasm. The catalysed reaction is 1-(5-phospho-beta-D-ribosyl)-ATP + diphosphate = 5-phospho-alpha-D-ribose 1-diphosphate + ATP. The protein operates within amino-acid biosynthesis; L-histidine biosynthesis; L-histidine from 5-phospho-alpha-D-ribose 1-diphosphate: step 1/9. Its activity is regulated as follows. Feedback inhibited by histidine. Catalyzes the condensation of ATP and 5-phosphoribose 1-diphosphate to form N'-(5'-phosphoribosyl)-ATP (PR-ATP). Has a crucial role in the pathway because the rate of histidine biosynthesis seems to be controlled primarily by regulation of HisG enzymatic activity. This Natronomonas pharaonis (strain ATCC 35678 / DSM 2160 / CIP 103997 / JCM 8858 / NBRC 14720 / NCIMB 2260 / Gabara) (Halobacterium pharaonis) protein is ATP phosphoribosyltransferase.